The primary structure comprises 205 residues: Holliday junction branch migration complex subunit RuvA (205 aa).

The segment at 1-64 is domain I; sequence MIGHIQGVLT…EDAQLLYGFI (64 aa). The segment at 65 to 143 is domain II; sequence SASERSLFRL…DWQPSTPFTD (79 aa). The segment at 136-157 is disordered; it reads QPSTPFTDRAPLDSQGMDAREH. The segment at 144-156 is flexible linker; the sequence is RAPLDSQGMDARE. Residues 157–205 are domain III; it reads HPADARTDAISALQSLGYKENQAEKALQKVYSAEHNSETLIRLALKQLS.

Belongs to the RuvA family. Homotetramer. Forms an RuvA(8)-RuvB(12)-Holliday junction (HJ) complex. HJ DNA is sandwiched between 2 RuvA tetramers; dsDNA enters through RuvA and exits via RuvB. An RuvB hexamer assembles on each DNA strand where it exits the tetramer. Each RuvB hexamer is contacted by two RuvA subunits (via domain III) on 2 adjacent RuvB subunits; this complex drives branch migration. In the full resolvosome a probable DNA-RuvA(4)-RuvB(12)-RuvC(2) complex forms which resolves the HJ.

Its subcellular location is the cytoplasm. Its function is as follows. The RuvA-RuvB-RuvC complex processes Holliday junction (HJ) DNA during genetic recombination and DNA repair, while the RuvA-RuvB complex plays an important role in the rescue of blocked DNA replication forks via replication fork reversal (RFR). RuvA specifically binds to HJ cruciform DNA, conferring on it an open structure. The RuvB hexamer acts as an ATP-dependent pump, pulling dsDNA into and through the RuvAB complex. HJ branch migration allows RuvC to scan DNA until it finds its consensus sequence, where it cleaves and resolves the cruciform DNA. The sequence is that of Holliday junction branch migration complex subunit RuvA from Idiomarina loihiensis (strain ATCC BAA-735 / DSM 15497 / L2-TR).